A 266-amino-acid chain; its full sequence is MTLFEIIILAIIQGVTEFLPISSSGHLLLPAELLGWVSQGLAFDVAVHVGSLLAVMIYFRQEIGQMTVAWVTQGFSKQQSTDSKLAWYVIVGTIPAVIIGFLMKGWIEENARTALVIAGTTIIFGLLLWYADATAKREQELEGLTLKQAIYIGLAQVLALIPGTSRSGITMTAGLMLGLKREACARFSFLLSIPVILGAGLLATLDLLSANEAVDWYALLYGAAFSFVSAYLCIYLFLSWIARIGMLPFVIYRLALGAVLLWFVFA.

8 consecutive transmembrane segments (helical) span residues 1 to 21 (MTLF…FLPI), 39 to 59 (QGLA…MIYF), 87 to 107 (WYVI…KGWI), 113 to 133 (TALV…YADA), 143 to 163 (GLTL…LIPG), 187 to 207 (FSFL…TLDL), 218 to 238 (ALLY…YLFL), and 244 to 264 (IGML…LWFV).

Belongs to the UppP family.

The protein resides in the cell inner membrane. It catalyses the reaction di-trans,octa-cis-undecaprenyl diphosphate + H2O = di-trans,octa-cis-undecaprenyl phosphate + phosphate + H(+). Functionally, catalyzes the dephosphorylation of undecaprenyl diphosphate (UPP). Confers resistance to bacitracin. In Alteromonas mediterranea (strain DSM 17117 / CIP 110805 / LMG 28347 / Deep ecotype), this protein is Undecaprenyl-diphosphatase.